Here is a 664-residue protein sequence, read N- to C-terminus: METPSQRRATRSGAQASSTPLSPTRITRLQEKEDLQELNDRLAVYIDRVRSLETENAGLRLRITESEEVVSREVSGIKSAYEAELGDARKTLDSVAKERARLQLELSKVREEFKELKARNTKKEGDLMAAQARLKDLEALLNSKEAALSTALSEKRTLEGELHDLRGQVAKLEAALGEAKKQLQDEMLRRVDAENRLQTLKEELDFQKNIYSEELRETKRRHETRLVEIDNGKQREFESRLADALQDLRAQHEDQVEQYKKELEKTYSAKLDNARQSAERNSNLVGAAHEELQQSRIRIDSLSAQLSQLQKQLAAKEAKLRDLEDSLARERDTSRRLLADKEREMAEMRARMQQQLDEYQELLDIKLALDMEIHAYRKLLEGEEERLRLSPSPTSQRSRGRASSHSSQTQSGGSVTKKRKLESSESRSSFSQHARTSGRVAVEEVDEEGKFVRLRNKSNEDQSMGNWQIKRQNGDDPLLTYRFPPKFTLKAGQVVTIWAAGAGATHSPPADLVWKSQNTWGCGNSLRTALINSTGEEVAMRKLVRSVTMIEDDEDEDGDDLLHHHHGSHGSSSGDPAEYNLRSRTVLCGTCGQPADKASASSSGAQVGGSISSGSSASSVTVTRSYRSVGGSGGGSFGDNLVTRSYLLGNSRPRTQSPQNCSIM.

Methionine 1 bears the N-acetylmethionine mark. Residues 1–24 form a disordered region; sequence METPSQRRATRSGAQASSTPLSPT. The tract at residues 1-33 is head; the sequence is METPSQRRATRSGAQASSTPLSPTRITRLQEKE. The tract at residues 1–130 is interaction with MLIP; the sequence is METPSQRRAT…TKKEGDLMAA (130 aa). Threonine 3 carries the post-translational modification Phosphothreonine. Serine 5 is modified (phosphoserine). Position 10 is a phosphothreonine (threonine 10). Serine 12 and serine 18 each carry phosphoserine. Phosphothreonine is present on threonine 19. A Phosphoserine modification is found at serine 22. In terms of domain architecture, IF rod spans 31–387; sequence EKEDLQELND…KLLEGEEERL (357 aa). At lysine 32 the chain carries N6-acetyllysine; alternate. The residue at position 32 (lysine 32) is an N6-succinyllysine; alternate. A Glycyl lysine isopeptide (Lys-Gly) (interchain with G-Cter in SUMO2); alternate cross-link involves residue lysine 32. The interval 34-70 is coil 1A; the sequence is DLQELNDRLAVYIDRVRSLETENAGLRLRITESEEVV. Serine 51, serine 66, and serine 71 each carry phosphoserine. The tract at residues 71-80 is linker 1; sequence SREVSGIKSA. Lysine 78 and lysine 97 each carry N6-acetyllysine. The tract at residues 81 to 218 is coil 1B; it reads YEAELGDARK…NIYSEELRET (138 aa). Lysine 97 participates in a covalent cross-link: Glycyl lysine isopeptide (Lys-Gly) (interchain with G-Cter in SUMO2). Serine 107 is modified (phosphoserine). Lysine 108, lysine 114, lysine 123, lysine 135, lysine 144, and lysine 155 each carry N6-acetyllysine. Lysine 171 is modified (N6-acetyllysine; alternate). Lysine 171 bears the N6-succinyllysine; alternate mark. Lysine 171 is covalently cross-linked (Glycyl lysine isopeptide (Lys-Gly) (interchain with G-Cter in SUMO2); alternate). N6-acetyllysine is present on residues lysine 180, lysine 201, and lysine 208. Lysine 201 participates in a covalent cross-link: Glycyl lysine isopeptide (Lys-Gly) (interchain with G-Cter in SUMO2); alternate. A Glycyl lysine isopeptide (Lys-Gly) (interchain with G-Cter in SUMO); alternate cross-link involves residue lysine 201. Lysine 208 participates in a covalent cross-link: Glycyl lysine isopeptide (Lys-Gly) (interchain with G-Cter in SUMO2). A Phosphoserine modification is found at serine 212. Residues lysine 219 and lysine 233 each participate in a glycyl lysine isopeptide (Lys-Gly) (interchain with G-Cter in SUMO2) cross-link. The linker 2 stretch occupies residues 219-242; sequence KRRHETRLVEIDNGKQREFESRLA. 4 positions are modified to N6-acetyllysine: lysine 233, lysine 260, lysine 265, and lysine 270. Positions 243–383 are coil 2; it reads DALQDLRAQH…HAYRKLLEGE (141 aa). A Glycyl lysine isopeptide (Lys-Gly) (interchain with G-Cter in SUMO2); alternate cross-link involves residue lysine 260. A Glycyl lysine isopeptide (Lys-Gly) (interchain with G-Cter in SUMO2); alternate cross-link involves residue lysine 270. Residues serine 277, serine 282, serine 301, and serine 307 each carry the phosphoserine modification. Residue lysine 311 forms a Glycyl lysine isopeptide (Lys-Gly) (interchain with G-Cter in SUMO2); alternate linkage. N6-acetyllysine is present on residues lysine 311, lysine 316, and lysine 341. Residues lysine 366 and lysine 378 each participate in a glycyl lysine isopeptide (Lys-Gly) (interchain with G-Cter in SUMO2) cross-link. Residues 384-442 are disordered; the sequence is EERLRLSPSPTSQRSRGRASSHSSQTQSGGSVTKKRKLESSESRSSFSQHARTSGRVAV. The interval 384–664 is tail; that stretch reads EERLRLSPSP…TQSPQNCSIM (281 aa). Serine 390, serine 392, serine 395, serine 398, serine 403, serine 404, serine 406, serine 407, and serine 414 each carry phosphoserine. Positions 403-414 are enriched in low complexity; that stretch reads SSHSSQTQSGGS. Position 416 is a phosphothreonine (threonine 416). Position 417 is an N6-acetyllysine (lysine 417). Residues lysine 417 and lysine 420 each participate in a glycyl lysine isopeptide (Lys-Gly) (interchain with G-Cter in SUMO2) cross-link. A Nuclear localization signal motif is present at residues 417–422; sequence KKRKLE. A phosphoserine mark is found at serine 423, serine 426, serine 429, and serine 431. The LTD domain maps to 428 to 545; sequence SSFSQHARTS…EEVAMRKLVR (118 aa). Lysine 450 participates in a covalent cross-link: Glycyl lysine isopeptide (Lys-Gly) (interchain with G-Cter in SUMO2); alternate. 2 positions are modified to N6-acetyllysine: lysine 450 and lysine 457. Residues serine 458 and serine 463 each carry the phosphoserine modification. Residues lysine 470 and lysine 486 each participate in a glycyl lysine isopeptide (Lys-Gly) (interchain with G-Cter in SUMO2) cross-link. Lysine 486 is modified (N6-acetyllysine). A phosphothreonine mark is found at threonine 496 and threonine 505. Residues serine 533 and serine 546 each carry the phosphoserine modification. Threonine 548 bears the Phosphothreonine mark. The interval 555–577 is disordered; sequence DEDGDDLLHHHHGSHGSSSGDPA. 2 positions are modified to phosphoserine: serine 568 and serine 571. Lysine 597 participates in a covalent cross-link: Glycyl lysine isopeptide (Lys-Gly) (interchain with G-Cter in SUMO2); alternate. Lysine 597 is covalently cross-linked (Glycyl lysine isopeptide (Lys-Gly) (interchain with G-Cter in SUMO1); alternate). Positions 598 to 620 are disordered; the sequence is ASASSSGAQVGGSISSGSSASSV. Residues serine 612, serine 613, serine 616, and serine 619 each carry the phosphoserine modification. 2 O-linked (GlcNAc) serine glycosylation sites follow: serine 625 and serine 628. Phosphoserine is present on residues serine 628, serine 632, and serine 636. The propeptide at 647-661 is removed in Lamin-A/C form; the sequence is LLGNSRPRTQSPQNC. Cysteine 661 is modified (cysteine methyl ester). Cysteine 661 is lipidated: S-farnesyl cysteine. A propeptide spans 662 to 664 (removed in Prelamin-A/C form and in Lamin-A/C form); that stretch reads SIM.

This sequence belongs to the intermediate filament family. Homodimer of lamin A and lamin C. Lamin dimers then assemble into dimeric head-to-tail polymers. Ultimately, two head-to-tail polymers assemble laterally into a protofilament with a uniformly shaped rod of 3.5 nm in diameter. Interacts with lamin-associated polypeptides IA, IB and TMPO-alpha, RB1 and with emerin. Interacts with SREBF1, SREBF2, SUN2 and TMEM43. Interacts with TMEM201. Proteolytically processed isoform A interacts with NARF. Interacts with SUN1. Interacts with MLIP. Interacts with DMPK; may regulate nuclear envelope stability. Interacts with SUV39H1; the interaction increases stability of SUV39H1. Interacts with SYNE2. Interacts with ITSN1 isoform 2. Interacts with IFFO1; enables the formation of an interior nucleoskeleton that is recruited to DNA double-strand breaks. In terms of assembly, interacts with EMD. As to quaternary structure, interacts (via C-terminus) with LEMD2 (via N-terminus) (in vitro). Proteolytic cleavage of the C-terminal of 18 residues of prelamin-A/C results in the production of lamin-A/C. The prelamin-A/C maturation pathway includes farnesylation of CAAX motif by protein farnesyltransferase (FNTA and FNTB), removal of the last three amino acids (-AAX) by RCE1/FACE2 and/or ZMPSTE24, methylation of the C-terminal cysteine by ICMT and endoproteolytic removal of the last 15 C-terminal amino acids by ZMPSTE24. Proteolytic cleavage requires prior farnesylation and methylation, and absence of these blocks cleavage. In terms of processing, farnesylation of prelamin-A/C facilitates nuclear envelope targeting. Post-translationally, phosphorylation plays a key role in lamin organization, subcellular localization and nuclear envelope disintegration. Phosphorylation by CDK1 at Ser-22 and Ser-392 at the onset of mitosis drives lamin disassembly and nuclear envelope breakdown. Phosphorylation at Ser-22 and Ser-392 during interphase promotes localization to the nucleoplasm and regulates lamina assembly. Phosphorylation at Ser-22, Ser-392 and Ser-628 during interphase causes redistribution between the nucleus and the cytoplasm. Phosphorylation at Ser-22 by CDK1 regulates matrix stiffness. Phosphorylation status of Ser-22 determines its localization between double-strand break (DSB) sites and the nuclear matrix. Phosphorylated by ATR at Ser-282 in response to DNA damage, leading to lamin disassembly and nuclear envelope rupture. Phosphorylation also regulates stability in micronuclei arising from genome instability: phosphorylation at Ser-395 by ATR in response to genome instability and double-stranded DNA breaks primes LMNA for subsequent phosphorylation at Ser-392 by CDK1 and micronuclei envelope rupture. The rupture of micronuclear envelope triggers the cGAS-STING pathway thereby activating the type I interferon response and innate immunity. Acetylation by KAT8 is required for nuclear architecture. In terms of processing, sumoylation is necessary for the localization to the nuclear envelope.

It localises to the nucleus lamina. The protein localises to the nucleus envelope. Its subcellular location is the nucleus. It is found in the nucleoplasm. The protein resides in the nucleus matrix. Lamins are intermediate filament proteins that assemble into a filamentous meshwork, and which constitute the major components of the nuclear lamina, a fibrous layer on the nucleoplasmic side of the inner nuclear membrane. Lamins provide a framework for the nuclear envelope, bridging the nuclear envelope and chromatin, thereby playing an important role in nuclear assembly, chromatin organization, nuclear membrane and telomere dynamics. Lamin A and C also regulate matrix stiffness by conferring nuclear mechanical properties. The structural integrity of the lamina is strictly controlled by the cell cycle, as seen by the disintegration and formation of the nuclear envelope in prophase and telophase, respectively. Lamin A and C are present in equal amounts in the lamina of mammals. Also invoved in DNA repair: recruited by DNA repair proteins XRCC4 and IFFO1 to the DNA double-strand breaks (DSBs) to prevent chromosome translocation by immobilizing broken DNA ends. Required for normal development of peripheral nervous system and skeletal muscle and for muscle satellite cell proliferation. Required for osteoblastogenesis and bone formation. Also prevents fat infiltration of muscle and bone marrow, helping to maintain the volume and strength of skeletal muscle and bone. Required for cardiac homeostasis. Functionally, prelamin-A/C can accelerate smooth muscle cell senescence. It acts to disrupt mitosis and induce DNA damage in vascular smooth muscle cells (VSMCs), leading to mitotic failure, genomic instability, and premature senescence. The protein is Prelamin-A/C (LMNA) of Sus scrofa (Pig).